Reading from the N-terminus, the 148-residue chain is uncharacterized protein (148 aa).

The interval 122–148 (HNWRKRMGTRRGRHEQSPTSRPRKGPD) is disordered. Over residues 123–134 (NWRKRMGTRRGR) the composition is skewed to basic residues.

This is an uncharacterized protein from Homo sapiens (Human).